The chain runs to 246 residues: Flavin-dependent thymidylate synthase (246 aa).

In terms of domain architecture, ThyX spans 17 to 241 (ITVELVKSAA…PLTHAAFNAN (225 aa)). Residues S69, 92-94 (RHR), and E101 contribute to the FAD site. Residues 89-92 (EFMR), 101-105 (EESGR), and R173 each bind dUMP. The ThyX motif motif lies at 92 to 103 (RHRVGWSYNEES). FAD-binding positions include 189-191 (NAR) and H195. Position 200 (R200) interacts with dUMP. R200 serves as the catalytic Involved in ionization of N3 of dUMP, leading to its activation.

The protein belongs to the thymidylate synthase ThyX family. Homotetramer. FAD serves as cofactor.

It catalyses the reaction dUMP + (6R)-5,10-methylene-5,6,7,8-tetrahydrofolate + NADPH + H(+) = dTMP + (6S)-5,6,7,8-tetrahydrofolate + NADP(+). It functions in the pathway pyrimidine metabolism; dTTP biosynthesis. Its function is as follows. Catalyzes the reductive methylation of 2'-deoxyuridine-5'-monophosphate (dUMP) to 2'-deoxythymidine-5'-monophosphate (dTMP) while utilizing 5,10-methylenetetrahydrofolate (mTHF) as the methyl donor, and NADPH and FADH(2) as the reductant. In Streptomyces coelicolor (strain ATCC BAA-471 / A3(2) / M145), this protein is Flavin-dependent thymidylate synthase.